We begin with the raw amino-acid sequence, 734 residues long: 1,4-alpha-glucan branching enzyme GlgB (734 aa).

D413 (nucleophile) is an active-site residue. The Proton donor role is filled by E466.

The protein belongs to the glycosyl hydrolase 13 family. GlgB subfamily. In terms of assembly, monomer.

It carries out the reaction Transfers a segment of a (1-&gt;4)-alpha-D-glucan chain to a primary hydroxy group in a similar glucan chain.. It functions in the pathway glycan biosynthesis; glycogen biosynthesis. In terms of biological role, catalyzes the formation of the alpha-1,6-glucosidic linkages in glycogen by scission of a 1,4-alpha-linked oligosaccharide from growing alpha-1,4-glucan chains and the subsequent attachment of the oligosaccharide to the alpha-1,6 position. This is 1,4-alpha-glucan branching enzyme GlgB from Nitrosomonas europaea (strain ATCC 19718 / CIP 103999 / KCTC 2705 / NBRC 14298).